Consider the following 291-residue polypeptide: N-acetylmannosamine kinase (291 aa).

Residues Ala5 to Lys12 and Gly132 to Cys139 each bind ATP. Positions 156, 166, 168, and 173 each coordinate Zn(2+).

The protein belongs to the ROK (NagC/XylR) family. NanK subfamily. In terms of assembly, homodimer.

It catalyses the reaction an N-acyl-D-mannosamine + ATP = an N-acyl-D-mannosamine 6-phosphate + ADP + H(+). It participates in amino-sugar metabolism; N-acetylneuraminate degradation; D-fructose 6-phosphate from N-acetylneuraminate: step 2/5. In terms of biological role, catalyzes the phosphorylation of N-acetylmannosamine (ManNAc) to ManNAc-6-P. In Salmonella gallinarum (strain 287/91 / NCTC 13346), this protein is N-acetylmannosamine kinase.